The sequence spans 755 residues: Kelch-like protein 5 (755 aa).

Residues 152–184 (LDRPEVDDGTSEEENESDSSSCRTSNSSQTLSS) are disordered. Residues 158–168 (DDGTSEEENES) are compositionally biased toward acidic residues. The segment covering 169-184 (DSSSCRTSNSSQTLSS) has biased composition (low complexity). The BTB domain occupies 220 to 287 (CDVILVAGDR…AYTGRLELKE (68 aa)). Kelch repeat units follow at residues 468 to 514 (TLFA…VLDD), 515 to 561 (KLYV…VLEG), 563 to 608 (MYAV…VLSG), 609 to 655 (KLYA…TWNG), 657 to 708 (LYAI…LLGD), and 709 to 754 (KLYA…VTVK).

Expressed in adrenal gland, ovary and thyroid gland and less abundantly in lymph node, prostate, spinal cord, testis and trachea.

The protein localises to the cytoplasm. It localises to the cytoskeleton. This is Kelch-like protein 5 (KLHL5) from Homo sapiens (Human).